The following is a 151-amino-acid chain: Chaperonin GroEL (151 aa).

41-45 (DGTTT) lines the ATP pocket.

Belongs to the chaperonin (HSP60) family. As to quaternary structure, forms a cylinder of 14 subunits composed of two heptameric rings stacked back-to-back. Interacts with the co-chaperonin GroES.

Its subcellular location is the cytoplasm. It catalyses the reaction ATP + H2O + a folded polypeptide = ADP + phosphate + an unfolded polypeptide.. Its function is as follows. Together with its co-chaperonin GroES, plays an essential role in assisting protein folding. The GroEL-GroES system forms a nano-cage that allows encapsulation of the non-native substrate proteins and provides a physical environment optimized to promote and accelerate protein folding. The chain is Chaperonin GroEL from Mycobacteroides chelonae (Mycobacterium chelonae).